Reading from the N-terminus, the 377-residue chain is tRNA-specific 2-thiouridylase MnmA (377 aa).

ATP-binding positions include 22–29 (GMSGGVDS) and Met-48. The interaction with target base in tRNA stretch occupies residues 108 to 110 (NPD). Cys-113 acts as the Nucleophile in catalysis. Cys-113 and Cys-210 are joined by a disulfide. Residue Gly-138 participates in ATP binding. The tract at residues 160–162 (KDQ) is interaction with tRNA. Residue Cys-210 is the Cysteine persulfide intermediate of the active site. An interaction with tRNA region spans residues 322 to 323 (RY).

The protein belongs to the MnmA/TRMU family.

The protein resides in the cytoplasm. The enzyme catalyses S-sulfanyl-L-cysteinyl-[protein] + uridine(34) in tRNA + AH2 + ATP = 2-thiouridine(34) in tRNA + L-cysteinyl-[protein] + A + AMP + diphosphate + H(+). Functionally, catalyzes the 2-thiolation of uridine at the wobble position (U34) of tRNA, leading to the formation of s(2)U34. This is tRNA-specific 2-thiouridylase MnmA from Shewanella amazonensis (strain ATCC BAA-1098 / SB2B).